We begin with the raw amino-acid sequence, 248 residues long: Peptidyl-prolyl cis-trans isomerase, chloroplastic (248 aa).

Positions 85–243 (FFDIEIGGES…KPCKIAKSGE (159 aa)) constitute a PPIase cyclophilin-type domain. Positions 223-248 (QETSKLDNSPKKPCKIAKSGELPLDG) are disordered.

Belongs to the cyclophilin-type PPIase family. In terms of tissue distribution, highly expressed in leaf.

The protein resides in the plastid. The protein localises to the chloroplast stroma. The catalysed reaction is [protein]-peptidylproline (omega=180) = [protein]-peptidylproline (omega=0). With respect to regulation, binds cyclosporin A (CsA). CsA mediates some of its effects via an inhibitory action on PPIase. Functionally, PPIases accelerate the folding of proteins. It catalyzes the cis-trans isomerization of proline imidic peptide bonds in oligopeptides. This is Peptidyl-prolyl cis-trans isomerase, chloroplastic from Vicia faba (Broad bean).